The sequence spans 364 residues: Mannose-1-phosphate guanyltransferase (364 aa).

It belongs to the transferase hexapeptide repeat family.

The protein resides in the cytoplasm. The catalysed reaction is alpha-D-mannose 1-phosphate + GTP + H(+) = GDP-alpha-D-mannose + diphosphate. It functions in the pathway nucleotide-sugar biosynthesis; GDP-alpha-D-mannose biosynthesis; GDP-alpha-D-mannose from alpha-D-mannose 1-phosphate (GTP route): step 1/1. Involved in cell wall synthesis where it is required for glycosylation. Involved in cell cycle progression through cell-size checkpoint. In Aspergillus oryzae (strain ATCC 42149 / RIB 40) (Yellow koji mold), this protein is Mannose-1-phosphate guanyltransferase (mpg1).